Here is a 53-residue protein sequence, read N- to C-terminus: UPF0391 membrane protein Bxeno_A1464 (53 aa).

The next 2 helical transmembrane spans lie at 5–25 (AAIFFIIAIIAAVFGFGGIAA) and 30–50 (IAKVLFFIFVVIFLVTLLMGV).

It belongs to the UPF0391 family.

The protein resides in the cell membrane. The polypeptide is UPF0391 membrane protein Bxeno_A1464 (Paraburkholderia xenovorans (strain LB400)).